We begin with the raw amino-acid sequence, 276 residues long: Diaminopimelate epimerase (276 aa).

Residues Asn-13, Gln-46, and Asn-66 each contribute to the substrate site. Cys-75 acts as the Proton donor in catalysis. Substrate contacts are provided by residues 76 to 77 (GN), Asn-159, Asn-192, and 210 to 211 (ER). Cys-219 serves as the catalytic Proton acceptor. Substrate is bound at residue 220–221 (GT).

This sequence belongs to the diaminopimelate epimerase family. In terms of assembly, homodimer.

It localises to the cytoplasm. The catalysed reaction is (2S,6S)-2,6-diaminopimelate = meso-2,6-diaminopimelate. The protein operates within amino-acid biosynthesis; L-lysine biosynthesis via DAP pathway; DL-2,6-diaminopimelate from LL-2,6-diaminopimelate: step 1/1. Catalyzes the stereoinversion of LL-2,6-diaminopimelate (L,L-DAP) to meso-diaminopimelate (meso-DAP), a precursor of L-lysine and an essential component of the bacterial peptidoglycan. In Pseudomonas syringae pv. tomato (strain ATCC BAA-871 / DC3000), this protein is Diaminopimelate epimerase.